The chain runs to 1357 residues: DNA-directed RNA polymerase subunit beta (1357 aa).

This sequence belongs to the RNA polymerase beta chain family. As to quaternary structure, the RNAP catalytic core consists of 2 alpha, 1 beta, 1 beta' and 1 omega subunit. When a sigma factor is associated with the core the holoenzyme is formed, which can initiate transcription.

The catalysed reaction is RNA(n) + a ribonucleoside 5'-triphosphate = RNA(n+1) + diphosphate. In terms of biological role, DNA-dependent RNA polymerase catalyzes the transcription of DNA into RNA using the four ribonucleoside triphosphates as substrates. In Pseudomonas fluorescens (strain ATCC BAA-477 / NRRL B-23932 / Pf-5), this protein is DNA-directed RNA polymerase subunit beta.